Here is a 422-residue protein sequence, read N- to C-terminus: UDP-N-acetylmuramoylalanine--D-glutamate ligase (422 aa).

102–108 provides a ligand contact to ATP; sequence GTNGKTT.

Belongs to the MurCDEF family.

The protein resides in the cytoplasm. The enzyme catalyses UDP-N-acetyl-alpha-D-muramoyl-L-alanine + D-glutamate + ATP = UDP-N-acetyl-alpha-D-muramoyl-L-alanyl-D-glutamate + ADP + phosphate + H(+). It functions in the pathway cell wall biogenesis; peptidoglycan biosynthesis. Functionally, cell wall formation. Catalyzes the addition of glutamate to the nucleotide precursor UDP-N-acetylmuramoyl-L-alanine (UMA). This Helicobacter pylori (strain HPAG1) protein is UDP-N-acetylmuramoylalanine--D-glutamate ligase.